We begin with the raw amino-acid sequence, 478 residues long: UDP-N-acetylmuramate--L-alanine ligase (478 aa).

112–118 (GTHGKTT) lines the ATP pocket.

This sequence belongs to the MurCDEF family.

The protein resides in the cytoplasm. It catalyses the reaction UDP-N-acetyl-alpha-D-muramate + L-alanine + ATP = UDP-N-acetyl-alpha-D-muramoyl-L-alanine + ADP + phosphate + H(+). Its pathway is cell wall biogenesis; peptidoglycan biosynthesis. Cell wall formation. This is UDP-N-acetylmuramate--L-alanine ligase from Polaromonas naphthalenivorans (strain CJ2).